The chain runs to 421 residues: Voltage-dependent calcium channel gamma-8 subunit (421 aa).

4 helical membrane-spanning segments follow: residues 19–39 (VQVL…TIAI), 127–147 (SSIF…CVAA), 157–177 (IILG…IGVI), and 207–227 (FGGL…NIYI). Residues Ser-251 and Ser-254 each carry the phosphoserine modification. Positions 271–304 (RRSRSSSRGSSEASPSRDASPGGPGGPGFASTDI) are disordered. Over residues 276–287 (SSRGSSEASPSR) the composition is skewed to low complexity. Residues 318-338 (VAAGLASAGGGGGGAGVGAYG) traverse the membrane as a helical segment. Disordered regions lie at residues 342–363 (GAAG…GFLT) and 378–421 (VTVT…TTPV). A compositionally biased stretch (pro residues) spans 384–397 (PAAPAPAPPAPAAP). The span at 408 to 421 (ASNTNTLNRKTTPV) shows a compositional bias: polar residues.

Belongs to the PMP-22/EMP/MP20 family. CACNG subfamily. In terms of assembly, interacts with CACNA1C. Identified in a complex with the L-type calcium channel subunits CACNA1C, CACNA2D1 and either CACNB1 or CACNB2. Acts as an auxiliary subunit for AMPA-selective glutamate receptors (AMPARs). Found in a complex with GRIA1, GRIA2, GRIA3, GRIA4, CNIH2, CNIH3, CACNG2, CACNG3, CACNG4, CACNG5 and CACNG7. Interacts with CNIH2. Found in a complex with GRIA1, GRIA2, GRIA3, GRIA4, DLG4 and CNIH2. Post-translationally, palmitoylated. Probably palmitoylated by ZDHHC3 and ZDHHC7.

Its subcellular location is the cell membrane. The protein localises to the postsynaptic density membrane. Its function is as follows. Regulates the activity of L-type calcium channels that contain CACNA1C as pore-forming subunit. Regulates the trafficking and gating properties of AMPA-selective glutamate receptors (AMPARs). Promotes their targeting to the cell membrane and synapses and modulates their gating properties by slowing their rates of activation, deactivation and desensitization and by mediating their resensitization. Does not show subunit-specific AMPA receptor regulation and regulates all AMPAR subunits. Thought to stabilize the calcium channel in an inactivated (closed) state. In Rattus norvegicus (Rat), this protein is Voltage-dependent calcium channel gamma-8 subunit.